Consider the following 254-residue polypeptide: Alcohol dehydrogenase 2 (254 aa).

10 to 33 contacts NAD(+); it reads FVAGLGGIGFDTSREIVKRGPKNL. Residue Ser138 coordinates substrate. The active-site Proton acceptor is the Tyr151.

It belongs to the short-chain dehydrogenases/reductases (SDR) family. Homodimer.

The enzyme catalyses a primary alcohol + NAD(+) = an aldehyde + NADH + H(+). It catalyses the reaction a secondary alcohol + NAD(+) = a ketone + NADH + H(+). The sequence is that of Alcohol dehydrogenase 2 (Adh2) from Drosophila mojavensis (Fruit fly).